A 155-amino-acid chain; its full sequence is Putative pre-16S rRNA nuclease (155 aa).

This sequence belongs to the YqgF nuclease family.

It localises to the cytoplasm. Functionally, could be a nuclease involved in processing of the 5'-end of pre-16S rRNA. This Paramagnetospirillum magneticum (strain ATCC 700264 / AMB-1) (Magnetospirillum magneticum) protein is Putative pre-16S rRNA nuclease.